We begin with the raw amino-acid sequence, 423 residues long: UDP-N-acetylglucosamine 1-carboxyvinyltransferase 2 (423 aa).

Residue 23–24 (KN) coordinates phosphoenolpyruvate. Arg93 contributes to the UDP-N-acetyl-alpha-D-glucosamine binding site. Cys117 serves as the catalytic Proton donor. Cys117 bears the 2-(S-cysteinyl)pyruvic acid O-phosphothioketal mark. UDP-N-acetyl-alpha-D-glucosamine contacts are provided by residues 122–126 (RPIDQ), Asp305, and Ile327.

The protein belongs to the EPSP synthase family. MurA subfamily.

It is found in the cytoplasm. The catalysed reaction is phosphoenolpyruvate + UDP-N-acetyl-alpha-D-glucosamine = UDP-N-acetyl-3-O-(1-carboxyvinyl)-alpha-D-glucosamine + phosphate. Its pathway is cell wall biogenesis; peptidoglycan biosynthesis. Its function is as follows. Cell wall formation. Adds enolpyruvyl to UDP-N-acetylglucosamine. The chain is UDP-N-acetylglucosamine 1-carboxyvinyltransferase 2 from Listeria monocytogenes serotype 4b (strain F2365).